Reading from the N-terminus, the 39-residue chain is Mu-theraphotoxin-Ae1a (39 aa).

Cystine bridges form between Cys-7/Cys-21, Cys-14/Cys-26, and Cys-20/Cys-33. A Phenylalanine amide modification is found at Phe-39.

The protein belongs to the neurotoxin 10 (Hwtx-1) family. 47 subfamily. As to expression, expressed by the venom gland.

The protein localises to the secreted. In terms of biological role, insecticidal toxin that acts, at least partially, by inhibiting insect voltage-gated sodium (NaV) channels of several insect species. The toxin binds to the voltage sensor in NaV channel domain II and inhibits channel opening by shifting the threshold for channel activation to more positive voltages. The toxin binding is sensitive to residues in the S1-S2 loop of the domain II voltage sensor. In vivo, the recombinant toxin causes paralysis and/or death to two dipteran species (Lucilia cuprina and Drosophila melanogaster). In contrast, the toxin does not show paralytic or lethal effect on the cotton bollworm Helicoverpa armigera and the triatomine bug Rhodinius prolixus. In Augacephalus ezendami (Mozambique baboon spider), this protein is Mu-theraphotoxin-Ae1a.